We begin with the raw amino-acid sequence, 172 residues long: MORN repeat-containing protein 5 (172 aa).

MORN repeat units lie at residues 8-30 (YIGE…TETK), 31-53 (YIGE…NGSR), and 54-75 (FDAV…DGLQ).

The protein resides in the cell projection. It is found in the cilium. Its subcellular location is the flagellum. This is MORN repeat-containing protein 5 (MORN5) from Bos taurus (Bovine).